Here is a 282-residue protein sequence, read N- to C-terminus: 4-diphosphocytidyl-2-C-methyl-D-erythritol kinase (282 aa).

The active site involves K9. 98–108 (PMGGGLGGGSS) is an ATP binding site. Residue D140 is part of the active site.

This sequence belongs to the GHMP kinase family. IspE subfamily. As to quaternary structure, homodimer.

The enzyme catalyses 4-CDP-2-C-methyl-D-erythritol + ATP = 4-CDP-2-C-methyl-D-erythritol 2-phosphate + ADP + H(+). Its pathway is isoprenoid biosynthesis; isopentenyl diphosphate biosynthesis via DXP pathway; isopentenyl diphosphate from 1-deoxy-D-xylulose 5-phosphate: step 3/6. Functionally, catalyzes the phosphorylation of the position 2 hydroxy group of 4-diphosphocytidyl-2C-methyl-D-erythritol. The protein is 4-diphosphocytidyl-2-C-methyl-D-erythritol kinase of Salmonella paratyphi A (strain ATCC 9150 / SARB42).